The primary structure comprises 225 residues: Ribonuclease 3 (225 aa).

An RNase III domain is found at 5–127; sequence IDKLERKIGY…IIGAVYLDSD (123 aa). Glu-40 provides a ligand contact to Mg(2+). The active site involves Asp-44. Residues Asp-113 and Glu-116 each contribute to the Mg(2+) site. Glu-116 is an active-site residue. Positions 154-224 constitute a DRBM domain; sequence DPKTRLQEFL…AETALEQLSN (71 aa).

This sequence belongs to the ribonuclease III family. As to quaternary structure, homodimer. It depends on Mg(2+) as a cofactor.

The protein resides in the cytoplasm. It catalyses the reaction Endonucleolytic cleavage to 5'-phosphomonoester.. Digests double-stranded RNA. Involved in the processing of primary rRNA transcript to yield the immediate precursors to the large and small rRNAs (23S and 16S). Processes some mRNAs, and tRNAs when they are encoded in the rRNA operon. Processes pre-crRNA and tracrRNA of type II CRISPR loci if present in the organism. This Vibrio atlanticus (strain LGP32) (Vibrio splendidus (strain Mel32)) protein is Ribonuclease 3.